The sequence spans 300 residues: Centromere protein O (300 aa).

Coiled-coil stretches lie at residues 18-42 (LAHL…QSVQ) and 83-109 (NQTV…QAYH). S35 is modified (phosphoserine).

The protein belongs to the CENP-O/MCM21 family. In terms of assembly, component of the CENPA-CAD complex, composed of CENPI, CENPK, CENPL, CENPO, CENPP, CENPQ, CENPR and CENPS. The CENPA-CAD complex interacts with the CENPA-NAC complex, at least composed of CENPA, CENPC, CENPH, CENPM, CENPN, CENPT and CENPU.

The protein localises to the nucleus. It localises to the chromosome. It is found in the centromere. Its subcellular location is the kinetochore. Component of the CENPA-CAD (nucleosome distal) complex, a complex recruited to centromeres which is involved in assembly of kinetochore proteins, mitotic progression and chromosome segregation. May be involved in incorporation of newly synthesized CENPA into centromeres via its interaction with the CENPA-NAC complex. Modulates the kinetochore-bound levels of NDC80 complex. The sequence is that of Centromere protein O (CENPO) from Homo sapiens (Human).